The sequence spans 867 residues: Protein argonaute-3 (867 aa).

The necessary and sufficient for interaction with krimp stretch occupies residues 1–83; that stretch reads MSGRGNLLSL…IDTLKTDDHT (83 aa). The segment at 1-289 is interaction with papi; the sequence is MSGRGNLLSL…CDVSHRILCQ (289 aa). 3 positions are modified to symmetric dimethylarginine: arginine 4, arginine 68, and arginine 70. One can recognise a PAZ domain in the interval 291 to 402; sequence TVLEMLVDLY…LIPELCYLTG (112 aa). The region spanning 566 to 853 is the Piwi domain; sequence MVVCICHNRR…LAYLIGQSIQ (288 aa).

Belongs to the argonaute family. Piwi subfamily. Component of the ping-pong piRNA processing (4P) complex consisting of krimp, aub and AGO3. Interacts (via N-terminus when not methylated on arginine residues) with krimp (via non-canonical tudor domain); this interaction leads to symmetrical dimethylation on AGO3 arginine residues and its subsequent dissociation from krimp. Krimp associated AGO3 is mostly free of piRNA binding and the interaction plays an important role in the loading of AGO3 with piRNAs; piRNA binding may stimulate dissociation of the two proteins. May form part of a piRNA processing complex consisting of tud, aub and AGO3. Interacts (when symmetrically dimethylated on arginine residues) with tud. Forms a complex with smg, twin, aub, nos mRNA and piRNAs that target the nos 3'-untranslated region, in early embryos. Interacts (via the N-terminal region when symmetrically methylated on arginine residues) with papi (via C-terminus); this interaction is RNA-independent and may be required for AGO3 localization to the nuage. Interacts with TER94 and tral. Post-translationally, symmetrically dimethylated on Arg-4, Arg-68 and Arg-70, most likely by csul/PRMT5/DART5. Methylation state probably functions as an indicator of its piRNA binding state. In ovary, expressed in germline stem cells, germline cyst cells, nurse cells and oocytes during early stages. Also found in the somatic cap cells of the germarium. In testis, expressed in germline stem cells, primary gonial cells and early spermatocytes. No expression detected in the somatic hub cells at the apical tip of the testis (at protein level). Expressed in neurons throughout the adult brain and in the mushroom body subdivision in the peduncle. In the mushroom body, expressed only in gamma and core alpha-beta neurons.

It is found in the cytoplasm. The protein resides in the perinuclear region. The protein localises to the cytoplasmic ribonucleoprotein granule. Functionally, component of the perinuclear meiotic nuage, a germline-specific subcellular membraneless ribonucleoprotein compartment involved in production of transposable element-repressing Piwi-interacting RNA (piRNA)-induced silencing complexes (piRISCs), which are essential for maintaining germline integrity during oogenesis. Acts via the Piwi-interacting RNA (piRNA) metabolic process, which mediates the repression of transposable elements during meiosis by forming complexes composed of piRNAs and Piwi proteins and governs the methylation and subsequent repression of transposons. Piwi protein that directly binds piRNAs, a class of 24 to 30 nucleotide RNAs that are generated by a Dicer-independent mechanism and are primarily derived from transposons and other repeated sequence elements. Associates predominantly with sense piRNAs that contain adenine at nucleotide 10, but shows no preference for uridine at the 5' end. Shows RNA cleavage or slicer activity. Together with Piwi protein aub recruited to subregions of the perinuclear nuage by krimp, which coordinates their activity in the ping-pong amplification step of secondary piRNA biogenesis. Krimp recruits piRNA bound aub and unbound AGO3, bringing them into close proximity to facilitate the loading onto AGO3 of freshly cut piRNAs generated by aub cleavage of target sequences; krimp recognizes the piRNA loading state of the Piwi proteins via symmetrically dimethylated arginine modification in their N-terminus. Important for asymmetric ping-pong amplification to bias production towards antisense piRNAs capable of silencing transposable elements. In testis, associates with Su(Ste) and AT-chX-1 piRNAs mostly produced from antisense precursors. In the germline, acts to amplify pools of antisense piRNAs, among others Su(Ste), AT-chX-1 and roo, and to limit sense piRNA accumulation. Forms a complex with smg, twin, aub and specific piRNAs that targets nos mRNA (and probably other maternal mRNAS) for deadenylation promoting its decay during early embryogenesis. Involved in transposon silencing in the adult brain. This Drosophila melanogaster (Fruit fly) protein is Protein argonaute-3.